Consider the following 597-residue polypeptide: Elongation factor 4 (597 aa).

Residues 2–184 (QHIRNFSIIA…AIVARVPSPE (183 aa)) enclose the tr-type G domain. GTP contacts are provided by residues 14–19 (DHGKST) and 131–134 (NKMD).

This sequence belongs to the TRAFAC class translation factor GTPase superfamily. Classic translation factor GTPase family. LepA subfamily.

Its subcellular location is the cell inner membrane. It catalyses the reaction GTP + H2O = GDP + phosphate + H(+). Its function is as follows. Required for accurate and efficient protein synthesis under certain stress conditions. May act as a fidelity factor of the translation reaction, by catalyzing a one-codon backward translocation of tRNAs on improperly translocated ribosomes. Back-translocation proceeds from a post-translocation (POST) complex to a pre-translocation (PRE) complex, thus giving elongation factor G a second chance to translocate the tRNAs correctly. Binds to ribosomes in a GTP-dependent manner. The protein is Elongation factor 4 of Bordetella avium (strain 197N).